A 400-amino-acid polypeptide reads, in one-letter code: Renin (400 aa).

The signal sequence occupies residues 1 to 17 (MPLWGLLLALWGCSTFS). Positions 18–59 (LPADTAAFRRIFLKKMPSVRESLKERGVDMAQLGAEWSQLTK) are cleaved as a propeptide — activation peptide. N65 carries an N-linked (GlcNAc...) asparagine glycan. The 318-residue stretch at 80 to 397 (YYGEIGIGTP…DRRNNRIGFA (318 aa)) folds into the Peptidase A1 domain. D98 is an active-site residue. A disulfide bridge connects residues C111 and C118. An N-linked (GlcNAc...) asparagine glycan is attached at N135. C277 and C281 form a disulfide bridge. Residue D286 is part of the active site. A disulfide bridge links C320 with C356. N353 carries N-linked (GlcNAc...) asparagine glycosylation.

This sequence belongs to the peptidase A1 family. Interacts with ATP6AP2. In terms of tissue distribution, kidney.

It localises to the secreted. The protein resides in the membrane. The enzyme catalyses Cleavage of Leu-|-Xaa bond in angiotensinogen to generate angiotensin I.. Interaction with ATP6AP2 results in a 5-fold increased efficiency in angiotensinogen processing. Its function is as follows. Renin is a highly specific endopeptidase, whose only known function is to generate angiotensin I from angiotensinogen in the plasma, initiating a cascade of reactions that produce an elevation of blood pressure and increased sodium retention by the kidney. In Ovis aries (Sheep), this protein is Renin (REN).